A 353-amino-acid chain; its full sequence is Mitochondrial ubiquitin ligase activator of nfkb 1 (353 aa).

Topologically, residues 1–8 (MENGGRPS) are cytoplasmic. A helical membrane pass occupies residues 9–29 (VGQVILLTTSSAITALFYSIY). At 30-239 (RHKYRSVQTL…LLEKQEVQMR (210 aa)) the chain is on the mitochondrial intermembrane side. A helical membrane pass occupies residues 240–260 (WWRILSIVFGVASCITLFFIL). Topologically, residues 261-353 (RRKYRHYKEK…IDRIVPLYNS (93 aa)) are cytoplasmic. The segment at 303 to 341 (CSICLSTEKSCVFLECGHVCSCISCYQALPSPKKCPICR) adopts an RING-type zinc-finger fold.

Homooligomer.

The protein localises to the mitochondrion outer membrane. It catalyses the reaction S-ubiquitinyl-[E2 ubiquitin-conjugating enzyme]-L-cysteine + [acceptor protein]-L-lysine = [E2 ubiquitin-conjugating enzyme]-L-cysteine + N(6)-ubiquitinyl-[acceptor protein]-L-lysine.. It functions in the pathway protein modification; protein ubiquitination. In terms of biological role, E3 ubiquitin-protein ligase that plays a role in the control of mitochondrial morphology. Promotes mitochondrial fragmentation and influences mitochondrial localization. Inhibits cell growth. E3 ubiquitin ligases accept ubiquitin from an E2 ubiquitin-conjugating enzyme in the form of a thioester and then directly transfer the ubiquitin to targeted substrates. In Xenopus laevis (African clawed frog), this protein is Mitochondrial ubiquitin ligase activator of nfkb 1 (mul1).